We begin with the raw amino-acid sequence, 330 residues long: GTPase Obg (330 aa).

The Obg domain occupies M1–L159. Residues S160 to K327 enclose the OBG-type G domain. GTP is bound by residues G166–S173, F191–V195, D212–G215, N279–D282, and S308–Y310. 2 residues coordinate Mg(2+): S173 and T193.

The protein belongs to the TRAFAC class OBG-HflX-like GTPase superfamily. OBG GTPase family. Monomer. It depends on Mg(2+) as a cofactor.

Its subcellular location is the cytoplasm. Its function is as follows. An essential GTPase which binds GTP, GDP and possibly (p)ppGpp with moderate affinity, with high nucleotide exchange rates and a fairly low GTP hydrolysis rate. Plays a role in control of the cell cycle, stress response, ribosome biogenesis and in those bacteria that undergo differentiation, in morphogenesis control. The sequence is that of GTPase Obg from Rickettsia akari (strain Hartford).